Here is a 481-residue protein sequence, read N- to C-terminus: Serine--tRNA ligase (481 aa).

Threonine 284 to glutamate 286 is a binding site for L-serine. Arginine 315–glutamate 317 lines the ATP pocket. An L-serine-binding site is contributed by glutamate 338. Residue glutamate 405–serine 408 participates in ATP binding. Residue serine 440 participates in L-serine binding.

The protein belongs to the class-II aminoacyl-tRNA synthetase family. Type-1 seryl-tRNA synthetase subfamily. As to quaternary structure, homodimer. The tRNA molecule binds across the dimer.

Its subcellular location is the cytoplasm. The enzyme catalyses tRNA(Ser) + L-serine + ATP = L-seryl-tRNA(Ser) + AMP + diphosphate + H(+). It carries out the reaction tRNA(Sec) + L-serine + ATP = L-seryl-tRNA(Sec) + AMP + diphosphate + H(+). Its pathway is aminoacyl-tRNA biosynthesis; selenocysteinyl-tRNA(Sec) biosynthesis; L-seryl-tRNA(Sec) from L-serine and tRNA(Sec): step 1/1. Functionally, catalyzes the attachment of serine to tRNA(Ser). Is also able to aminoacylate tRNA(Sec) with serine, to form the misacylated tRNA L-seryl-tRNA(Sec), which will be further converted into selenocysteinyl-tRNA(Sec). In Rhodopseudomonas palustris (strain BisB18), this protein is Serine--tRNA ligase.